The sequence spans 78 residues: Vacuolar ATPase assembly integral membrane protein VMA21 (78 aa).

Residues 1–14 (MPADIPKSVVQKLV) are Cytoplasmic-facing. A helical membrane pass occupies residues 15-35 (FFTAAMIICPVATFFICQYLF). Over 36-38 (SNN) the chain is Lumenal. The helical transmembrane segment at 39-59 (AIISGGVSALVANIVLIGYVV) threads the bilayer. The Cytoplasmic portion of the chain corresponds to 60-78 (AAFMEDTTEQEPEETKKSR). The short motif at 75 to 78 (KKSR) is the Prevents secretion from ER element.

It belongs to the VMA21 family.

The protein localises to the endoplasmic reticulum membrane. It is found in the endoplasmic reticulum-Golgi intermediate compartment membrane. It localises to the cytoplasmic vesicle. The protein resides in the COPII-coated vesicle membrane. Functionally, required for the assembly of the V0 complex of the vacuolar ATPase (V-ATPase) in the endoplasmic reticulum. In Debaryomyces hansenii (strain ATCC 36239 / CBS 767 / BCRC 21394 / JCM 1990 / NBRC 0083 / IGC 2968) (Yeast), this protein is Vacuolar ATPase assembly integral membrane protein VMA21.